Reading from the N-terminus, the 407-residue chain is MAETLEPSLVGEIDTSAPFESVREAATRFGGFGFWKPSSLNISEASQNEVGMVLKASELEKELIEKEGETLKVLKSLESTKAIVEELKSKIQNKEDKENCDMNVFKELNQAKMNLCKTTKDLAAIRVSVGLLNKRLEEERAALEKTRERLNSENAAEMSMEIQRLSYEAKEFSRTGENVRYAVNKAVAEIEQTRNKIEAAEMRLIAARKMKEAARAAEAVAIAEIKAVTRRGRRRRRGGNGEETMQEEILETIDETAREIRSSRRTLEEGLAKMEAEEGNWWWTEQRRRSSCSAKFKNPPYMMDVKGLNMMMNGDGTSSSVAVLKPTMSIGQILSRKLLLADESAMMMNGRVSLGQILGKTNFGDREKEKRFNGKRKRFGFANLSVMLNKESKKKNKKKKIALNLSC.

3 coiled-coil regions span residues 72–99 (KVLK…DKEN), 128–217 (SVGL…ARAA), and 247–278 (EEIL…EAEE).

Belongs to the WEB family.

This chain is WEB family protein At3g51720, found in Arabidopsis thaliana (Mouse-ear cress).